The sequence spans 377 residues: Succinyl-diaminopimelate desuccinylase (377 aa).

Residue His66 coordinates Zn(2+). Asp68 is a catalytic residue. Asp99 is a binding site for Zn(2+). Residue Glu133 is the Proton acceptor of the active site. Zn(2+)-binding residues include Glu134, Glu162, and His348.

The protein belongs to the peptidase M20A family. DapE subfamily. As to quaternary structure, homodimer. The cofactor is Zn(2+). It depends on Co(2+) as a cofactor.

The enzyme catalyses N-succinyl-(2S,6S)-2,6-diaminopimelate + H2O = (2S,6S)-2,6-diaminopimelate + succinate. It participates in amino-acid biosynthesis; L-lysine biosynthesis via DAP pathway; LL-2,6-diaminopimelate from (S)-tetrahydrodipicolinate (succinylase route): step 3/3. Its function is as follows. Catalyzes the hydrolysis of N-succinyl-L,L-diaminopimelic acid (SDAP), forming succinate and LL-2,6-diaminopimelate (DAP), an intermediate involved in the bacterial biosynthesis of lysine and meso-diaminopimelic acid, an essential component of bacterial cell walls. The polypeptide is Succinyl-diaminopimelate desuccinylase (Xylella fastidiosa (strain M12)).